Consider the following 3179-residue polypeptide: Guanylate cyclase beta (3179 aa).

At 1–60 (MKTQTLSLMNINGKRKFLGTNNKIYRKVIINPTSEDDIQKFCRNYFRIYNFSLYNFIRRL) the chain is on the cytoplasmic side. The chain crosses the membrane as a helical span at residues 61–81 (ISFDAILVYSLFLTVYIFSEI). The Extracellular portion of the chain corresponds to 82–88 (NHGETKK). The helical transmembrane segment at 89–109 (YLFIDTAISLFFNIILLIVIE) threads the bilayer. At 110–295 (SLFELKKLKD…FCIKMNNIVY (186 aa)) the chain is on the cytoplasmic side. A helical membrane pass occupies residues 296 to 316 (YLIFMYFVFVVLSIVIKTIFF). The Extracellular segment spans residues 317–328 (HKKNSFQNSRDS). A helical transmembrane segment spans residues 329 to 349 (FLSMLEDFVGLYILVLPIMMY). Residues 350-988 (SEKSLIYIIQ…GRLNRFSLCK (639 aa)) are Cytoplasmic-facing. Residues 989 to 1009 (VFLWIIYLKITVVSFYFFHNF) form a helical membrane-spanning segment. Over 1010–1020 (DNYFSGSSASS) the chain is Extracellular. Residues 1021–1041 (ILYTQTTFALLHYFLIIAFSA) form a helical membrane-spanning segment. The Cytoplasmic portion of the chain corresponds to 1042-1069 (YEIDLPYKFVRRLPYIYQLSRRKYFLNN). The chain crosses the membrane as a helical span at residues 1070 to 1090 (NIILLTIIEAILISLTSYYIL). The Extracellular portion of the chain corresponds to 1091-1102 (RLNVFHLITHRE). Residues 1103–1123 (FTFHIFILNVFITTEKILLLS) traverse the membrane as a helical segment. Over 1124–1127 (KTWH) the chain is Cytoplasmic. A helical membrane pass occupies residues 1128–1148 (IYFFIMAVLIIGILLIYVNIF). Topologically, residues 1149–1168 (TLVDCIKNGKCEFSLFQMEN) are extracellular. A helical membrane pass occupies residues 1169–1189 (IYFWTSLFPILYINFIFDKLM). Residues 1190 to 1304 (KYIKNRIYPD…YEKGNKLKLR (115 aa)) lie on the Cytoplasmic side of the membrane. Residues 1305–1325 (IIVILLFLIYIIIFSSQTIID) form a helical membrane-spanning segment. At 1326–1331 (INTKSN) the chain is on the extracellular side. A helical transmembrane segment spans residues 1332-1352 (IHYITMFYIIYFVLACVLLIY). Topologically, residues 1353 to 1360 (IRIRNKAT) are cytoplasmic. The chain crosses the membrane as a helical span at residues 1361-1381 (STFFFFLSRFLLICGFCIELY). The Extracellular portion of the chain corresponds to 1382–1401 (DNISNDILNVLITYSFTVSY). The N-linked (GlcNAc...) asparagine glycan is linked to N1383. A helical membrane pass occupies residues 1402 to 1422 (IFFMSFKILEALLVCISILLL). The Cytoplasmic portion of the chain corresponds to 1423–1464 (TFGVYYEKNKNMIDICTHFCSNPYLSINNLDHMNISCLCKKQ). Residues 1465 to 1485 (IVIFLISLLSFTLICLSMKYY) traverse the membrane as a helical segment. The Extracellular segment spans residues 1486-1507 (EIFYLKKKFLFRYKQKVNLAKQ). Residues 1508-1528 (IEILHTMLPNFLVEYLLISDP) form a helical membrane-spanning segment. Topologically, residues 1529-2739 (KNDGIMVGKN…IINIDLTKKL (1211 aa)) are cytoplasmic. Residues 1548 to 1700 (SVIFCDIDDF…DTVNTASRMK (153 aa)) form the Guanylate cyclase 1 domain. Disordered stretches follow at residues 2123-2153 (LHNYNPMKNKNKNKKNNKNVRRNEYPNYTSS), 2355-2379 (SINKQTERKPKKKNKKNIENKKDKK), and 2576-2656 (KDSD…HHHS). A compositionally biased stretch (basic residues) spans 2131–2142 (NKNKNKKNNKNV). Residues 2584–2607 (NNNKISKNRYNNNNNNNNSNYSNI) show a composition bias toward low complexity. Positions 2614–2645 (HNNKKNHHHNNNKYHHHNNNKYHHHNNNKYHH) are enriched in basic residues. Residues 2740 to 2760 (IIIFIFTEIFLSLCNIIELSF) traverse the membrane as a helical segment. The Extracellular segment spans residues 2761 to 2770 (YEKKLRYNDS). The N-linked (GlcNAc...) asparagine glycan is linked to N2768. A helical membrane pass occupies residues 2771-2791 (IVIIWLIRSIYLFIITYIWII). Residues 2792 to 2809 (LKTKLKEYKNNSSKMMWT) lie on the Cytoplasmic side of the membrane. A helical transmembrane segment spans residues 2810-2830 (IFILNIFLCSWGIILIDLSCI). Residues 2831–2842 (HYSMLLGNKNER) lie on the Extracellular side of the membrane. Residues 2843–2863 (ALFFMKDASELIICIQLIFIK) form a helical membrane-spanning segment. Residues 2864-2870 (NMLFKHK) lie on the Cytoplasmic side of the membrane. The helical transmembrane segment at 2871-2891 (FFFFVFFYIFLIYSFSKLFSI) threads the bilayer. Residues 2892–2895 (HTCQ) are Extracellular-facing. The chain crosses the membrane as a helical span at residues 2896–2916 (THICCSIILFISINILYFWYS). Residues 2917 to 3179 (EYLDRIQFLV…KLRQKKGLRS (263 aa)) are Cytoplasmic-facing. In terms of domain architecture, Guanylate cyclase 2 spans 2968-3102 (AFLFADIVGF…LDVLIANKIE (135 aa)). Residues D2973, I2974, and D3017 each contribute to the Mg(2+) site.

The protein in the N-terminal section; belongs to the cation transport ATPase (P-type) (TC 3.A.3) family. Type IV subfamily. In the C-terminal section; belongs to the adenylyl cyclase class-4/guanylyl cyclase family. Mg(2+) serves as cofactor. Requires Mn(2+) as cofactor.

The protein localises to the membrane. It catalyses the reaction GTP = 3',5'-cyclic GMP + diphosphate. Basal guanylate activity of the recombinant guanylate cyclase domains 1 and 2 is not modulated by an increase in Ca(2+) levels or by the gametogenesis inducer xanthurenic acid. Catalyzes the synthesis of the second messenger cGMP from GTP. Regulates cGMP production in gametocytes; however, is dispensable for the initiation of gametogenesis. Does not have adenylate cyclase activity. In Plasmodium falciparum (isolate 3D7), this protein is Guanylate cyclase beta.